Here is a 1381-residue protein sequence, read N- to C-terminus: Hepatocyte growth factor receptor (1381 aa).

A signal peptide spans 1–24 (MKAPAVLAPGILMLLFTLVQRSNG). Residues 25–932 (ECKEALAKSE…VIVQPDQNFT (908 aa)) lie on the Extracellular side of the membrane. Residues 27 to 515 (KEALAKSEMN…TGKKITKIPL (489 aa)) form the Sema domain. Residue Asn45 is glycosylated (N-linked (GlcNAc...) asparagine). Intrachain disulfides connect Cys95-Cys101, Cys98-Cys160, Cys133-Cys141, and Cys172-Cys175. N-linked (GlcNAc...) asparagine glycosylation occurs at Asn106. An N-linked (GlcNAc...) asparagine glycan is attached at Asn149. Asn202 carries an N-linked (GlcNAc...) asparagine glycan. Disulfide bonds link Cys298–Cys363 and Cys385–Cys397. 2 N-linked (GlcNAc...) asparagine glycosylation sites follow: Asn399 and Asn405. 4 disulfide bridges follow: Cys520–Cys538, Cys526–Cys561, Cys529–Cys545, and Cys541–Cys551. IPT/TIG domains lie at 563-655 (PAIY…FSYV), 657-739 (PIIT…FSYR), and 742-836 (PIVY…LIYV). Thr582 carries O-linked (Man) threonine glycosylation. Residues Asn607 and Asn635 are each glycosylated (N-linked (GlcNAc...) asparagine). Thr676 and Thr761 each carry an O-linked (Man) threonine glycan. N-linked (GlcNAc...) asparagine glycosylation is found at Asn785, Asn879, and Asn930. The helical transmembrane segment at 933-955 (GLIAGVVSISIALLLLLGLFLWL) threads the bilayer. Residues 956–1381 (KKRKQIKDLG…EDNADDEVDT (426 aa)) lie on the Cytoplasmic side of the membrane. Ser966 is modified (phosphoserine). The residue at position 977 (Thr977) is a Phosphothreonine. A phosphoserine mark is found at Ser990, Ser997, and Ser1000. Phosphotyrosine is present on Tyr1003. Residues 1078–1345 (VHFNEVIGRG…RISAIFSTFI (268 aa)) enclose the Protein kinase domain. ATP is bound by residues 1084–1092 (IGRGHFGCV) and Lys1110. Residue Asp1204 is the Proton acceptor of the active site. An interaction with RANBP9 region spans residues 1212–1381 (LDEKFTVKVA…EDNADDEVDT (170 aa)). Tyr1230 is modified (phosphotyrosine). 2 positions are modified to phosphotyrosine; by autocatalysis: Tyr1234 and Tyr1235. At Thr1289 the chain carries Phosphothreonine. The interaction with MUC20 stretch occupies residues 1320–1359 (WHPKAEMRPSFSELVSRISAIFSTFIGEHYVHVNATYVNV). 2 positions are modified to phosphotyrosine; by autocatalysis: Tyr1349 and Tyr1356. Phosphotyrosine is present on Tyr1365.

Belongs to the protein kinase superfamily. Tyr protein kinase family. In terms of assembly, heterodimer made of an alpha chain (50 kDa) and a beta chain (145 kDa) which are disulfide linked. Binds PLXNB1. Interacts when phosphorylated with downstream effectors including STAT3, PIK3R1, SRC, PCLG1, GRB2 and GAB1. Interacts with SPSB1, SPSB2 and SPSB4. Interacts with INPP5D/SHIP1. When phosphorylated at Tyr-1356, interacts with INPPL1/SHIP2. Interacts with RANBP9 and RANBP10, as well as SPSB1, SPSB2, SPSB3 and SPSB4. SPSB1 binding occurs in the presence and in the absence of HGF, however HGF treatment has a positive effect on this interaction. Interacts with MUC20; prevents interaction with GRB2 and suppresses hepatocyte growth factor-induced cell proliferation. Interacts with GRB10. Interacts with PTPN1 and PTPN2. Interacts with HSP90AA1 and HSP90AB1; the interaction suppresses MET kinase activity. Interacts with tensin TNS3. Interacts (when phosphorylated) with tensin TNS4 (via SH2 domain); the interaction increases MET protein stability by inhibiting MET endocytosis and subsequent lysosomal degradation. (Microbial infection) Immunoprecipitates with L.monocytogenes InlB. InlB probably dimerizes upon binding to MET, which encourages subsequent dimerization of MET. Autophosphorylated in response to ligand binding on Tyr-1234 and Tyr-1235 in the kinase domain leading to further phosphorylation of Tyr-1349 and Tyr-1356 in the C-terminal multifunctional docking site. Dephosphorylated by PTPRJ at Tyr-1349 and Tyr-1365. Dephosphorylated by PTPN1 and PTPN2. In terms of processing, ubiquitinated. Ubiquitination by CBL regulates the receptor stability and activity through proteasomal degradation. Post-translationally, O-mannosylation of IPT/TIG domains by TMEM260 is required for protein maturation. O-mannosylated residues are composed of single mannose glycans that are not elongated or modified. (Microbial infection) Tyrosine phosphorylation is stimulated by L.monocytogenes InlB.

The protein localises to the membrane. The catalysed reaction is L-tyrosyl-[protein] + ATP = O-phospho-L-tyrosyl-[protein] + ADP + H(+). With respect to regulation, in its inactive state, the C-terminal tail interacts with the catalytic domain and inhibits the kinase activity. Upon ligand binding, the C-terminal tail is displaced and becomes phosphorylated, thus increasing the kinase activity. Its function is as follows. Receptor tyrosine kinase that transduces signals from the extracellular matrix into the cytoplasm by binding to hepatocyte growth factor/HGF ligand. Regulates many physiological processes including proliferation, scattering, morphogenesis and survival. Ligand binding at the cell surface induces autophosphorylation of MET on its intracellular domain that provides docking sites for downstream signaling molecules. Following activation by ligand, interacts with the PI3-kinase subunit PIK3R1, PLCG1, SRC, GRB2, STAT3 or the adapter GAB1. Recruitment of these downstream effectors by MET leads to the activation of several signaling cascades including the RAS-ERK, PI3 kinase-AKT, or PLCgamma-PKC. The RAS-ERK activation is associated with the morphogenetic effects while PI3K/AKT coordinates prosurvival effects. During embryonic development, MET signaling plays a role in gastrulation, development and migration of muscles and neuronal precursors, angiogenesis and kidney formation. In adults, participates in wound healing as well as organ regeneration and tissue remodeling. Also promotes differentiation and proliferation of hematopoietic cells. Functionally, (Microbial infection) Acts as a receptor for Listeria monocytogenes internalin InlB, mediating entry of the pathogen into cells. In Chlorocebus aethiops (Green monkey), this protein is Hepatocyte growth factor receptor (MET).